The sequence spans 134 residues: UPF0412 protein YaaI (134 aa).

The N-terminal stretch at 1-23 is a signal peptide; it reads MKSVFTLSASLAISLMLCCTAQA.

The protein belongs to the UPF0412 family.

The sequence is that of UPF0412 protein YaaI from Escherichia coli O17:K52:H18 (strain UMN026 / ExPEC).